A 394-amino-acid polypeptide reads, in one-letter code: Guanine nucleotide-binding protein G(s) subunit alpha (394 aa).

A disordered region spans residues 1 to 23; it reads MGCLGNSKTEDQRNEEKAQREAN. G2 is lipidated: N-palmitoyl glycine. A lipid anchor (S-palmitoyl cysteine) is attached at C3. The span at 8–23 shows a compositional bias: basic and acidic residues; sequence KTEDQRNEEKAQREAN. In terms of domain architecture, G-alpha spans 39–394; that stretch reads ATHRLLLLGA…RMHLRQYELL (356 aa). Residues 42-55 are G1 motif; that stretch reads RLLLLGAGESGKST. 47-55 provides a ligand contact to GTP; sequence GAGESGKST. Residue S54 participates in Mg(2+) binding. The tract at residues 68–91 is disordered; it reads FNGEGGEEDPQAARSNSDGEKATK. The interval 196–204 is G2 motif; the sequence is DLLRCRVLT. GTP contacts are provided by residues 197–204, 223–227, 292–295, and A366; these read LLRCRVLT, DVGGQ, and NKQD. T204 lines the Mg(2+) pocket. Residues 219 to 228 are G3 motif; sequence FHMFDVGGQR. The segment at 288-295 is G4 motif; it reads ILFLNKQD. The G5 motif stretch occupies residues 364 to 369; it reads TCAVDT.

Belongs to the G-alpha family. G(s) subfamily. Heterotrimeric G proteins are composed of 3 units; alpha, beta and gamma. The alpha chain contains the guanine nucleotide binding site. Interacts with CRY1; the interaction may block GPCR-mediated regulation of cAMP concentrations. Interacts with ADCY6 and stimulates its adenylyl cyclase activity. Interacts with ADCY2 and ADCY5. Stimulates the ADCY5 adenylyl cyclase activity. Interaction with SASH1.

The protein resides in the cell membrane. Functionally, guanine nucleotide-binding proteins (G proteins) function as transducers in numerous signaling pathways controlled by G protein-coupled receptors (GPCRs). Signaling involves the activation of adenylyl cyclases, resulting in increased levels of the signaling molecule cAMP. GNAS functions downstream of several GPCRs, including beta-adrenergic receptors. Stimulates the Ras signaling pathway via RAPGEF2. The protein is Guanine nucleotide-binding protein G(s) subunit alpha (GNAS) of Canis lupus familiaris (Dog).